Reading from the N-terminus, the 229-residue chain is Large ribosomal subunit protein uL1 (229 aa).

Belongs to the universal ribosomal protein uL1 family. Part of the 50S ribosomal subunit.

Functionally, binds directly to 23S rRNA. The L1 stalk is quite mobile in the ribosome, and is involved in E site tRNA release. Its function is as follows. Protein L1 is also a translational repressor protein, it controls the translation of the L11 operon by binding to its mRNA. This is Large ribosomal subunit protein uL1 from Streptococcus gordonii (strain Challis / ATCC 35105 / BCRC 15272 / CH1 / DL1 / V288).